We begin with the raw amino-acid sequence, 254 residues long: Imidazole glycerol phosphate synthase subunit HisF (254 aa).

Catalysis depends on residues Asp11 and Asp130.

The protein belongs to the HisA/HisF family. Heterodimer of HisH and HisF.

Its subcellular location is the cytoplasm. It catalyses the reaction 5-[(5-phospho-1-deoxy-D-ribulos-1-ylimino)methylamino]-1-(5-phospho-beta-D-ribosyl)imidazole-4-carboxamide + L-glutamine = D-erythro-1-(imidazol-4-yl)glycerol 3-phosphate + 5-amino-1-(5-phospho-beta-D-ribosyl)imidazole-4-carboxamide + L-glutamate + H(+). The protein operates within amino-acid biosynthesis; L-histidine biosynthesis; L-histidine from 5-phospho-alpha-D-ribose 1-diphosphate: step 5/9. Functionally, IGPS catalyzes the conversion of PRFAR and glutamine to IGP, AICAR and glutamate. The HisF subunit catalyzes the cyclization activity that produces IGP and AICAR from PRFAR using the ammonia provided by the HisH subunit. The sequence is that of Imidazole glycerol phosphate synthase subunit HisF from Halorhodospira halophila (strain DSM 244 / SL1) (Ectothiorhodospira halophila (strain DSM 244 / SL1)).